Reading from the N-terminus, the 508-residue chain is Maturase K (508 aa).

This sequence belongs to the intron maturase 2 family. MatK subfamily.

The protein resides in the plastid. The protein localises to the chloroplast. In terms of biological role, usually encoded in the trnK tRNA gene intron. Probably assists in splicing its own and other chloroplast group II introns. The protein is Maturase K of Lupinus cosentinii (West Australian blue lupine).